A 122-amino-acid polypeptide reads, in one-letter code: U19-hexatoxin-Hi1a (122 aa).

The signal sequence occupies residues 1 to 18 (MNTMIGFIVLLVSATVLG). Residues 19 to 80 (DPELDALRKE…YENSNFREKR (62 aa)) constitute a propeptide that is removed on maturation. 3 disulfide bridges follow: Cys-81–Cys-96, Cys-88–Cys-101, and Cys-95–Cys-116.

In terms of tissue distribution, expressed by the venom gland.

Its subcellular location is the secreted. Its function is as follows. Probable ion channel inhibitor. This is U19-hexatoxin-Hi1a from Hadronyche infensa (Fraser island funnel-web spider).